Consider the following 260-residue polypeptide: Activator of 90 kDa heat shock protein ATPase homolog 2 (260 aa).

The protein belongs to the AHA1 family.

In terms of biological role, co-chaperone that stimulates HSP90 ATPase activity. In Bos taurus (Bovine), this protein is Activator of 90 kDa heat shock protein ATPase homolog 2 (AHSA2).